Reading from the N-terminus, the 508-residue chain is Probable cytochrome P450 6d5 (508 aa).

Cys453 contributes to the heme binding site.

Belongs to the cytochrome P450 family. It depends on heme as a cofactor.

It localises to the endoplasmic reticulum membrane. The protein localises to the microsome membrane. Its function is as follows. May be involved in the metabolism of insect hormones and in the breakdown of synthetic insecticides. The sequence is that of Probable cytochrome P450 6d5 (Cyp6d5) from Drosophila melanogaster (Fruit fly).